We begin with the raw amino-acid sequence, 290 residues long: Pyridoxal kinase PdxY (290 aa).

Substrate contacts are provided by residues Ser-12 and 47 to 48 (TQ). ATP-binding positions include Asp-114, Glu-151, Lys-184, and 211 to 214 (RPLL). Asp-225 lines the substrate pocket.

This sequence belongs to the pyridoxine kinase family. PdxY subfamily. Homodimer. Mg(2+) is required as a cofactor.

It carries out the reaction pyridoxal + ATP = pyridoxal 5'-phosphate + ADP + H(+). Its pathway is cofactor metabolism; pyridoxal 5'-phosphate salvage; pyridoxal 5'-phosphate from pyridoxal: step 1/1. Pyridoxal kinase involved in the salvage pathway of pyridoxal 5'-phosphate (PLP). Catalyzes the phosphorylation of pyridoxal to PLP. The protein is Pyridoxal kinase PdxY of Pseudomonas putida (strain W619).